The sequence spans 358 residues: Chondroadherin (358 aa).

The signal sequence occupies residues 1 to 20; sequence MARVLLLSLVFLAILLPALA. Residues 21-50 enclose the LRRNT domain; it reads ACPQNCHCHGDLQHVICDKVGLQKIPKVSE. Cysteine 22 and cysteine 37 are joined by a disulfide. LRR repeat units lie at residues 51-72, 75-96, 99-120, 123-144, 147-168, 171-192, 195-216, 219-240, 244-265, and 268-289; these read TTKL…SFRT, NLVS…AFRG, QLIY…AFDD, ELTY…LLSP, NLFI…AFQG, DLRW…SLDD, NLAK…ALSK, VVEE…AFQS, YLET…AFAG, and TLKH…FPFD. Serine 143 carries O-linked (GalNAc...) serine glycosylation. The LRRCT domain occupies 299–347; the sequence is NPWKCTCQLRGLRRWLEAKTSRPDATCSSPAKFKGQRIRDTDALRSCKS. Intrachain disulfides connect cysteine 303-cysteine 345 and cysteine 305-cysteine 325. The interval 321–358 is disordered; the sequence is PDATCSSPAKFKGQRIRDTDALRSCKSPTKRSKKAGRH. The span at 348–358 shows a compositional bias: basic residues; the sequence is PTKRSKKAGRH.

This sequence belongs to the small leucine-rich proteoglycan (SLRP) family. SLRP class IV subfamily. In terms of assembly, mostly monomeric. As to expression, present in femoral head and rib cartilage, as well as in tendon. Detected in bone marrow.

The protein localises to the secreted. It localises to the extracellular space. The protein resides in the extracellular matrix. In terms of biological role, promotes attachment of chondrocytes, fibroblasts, and osteoblasts. This binding is mediated (at least for chondrocytes and fibroblasts) by the integrin alpha(2)beta(1). May play an important role in the regulation of chondrocyte growth and proliferation. The protein is Chondroadherin (Chad) of Rattus norvegicus (Rat).